A 293-amino-acid polypeptide reads, in one-letter code: DNA repair protein RecO (293 aa).

Belongs to the RecO family.

Its function is as follows. Involved in DNA repair and RecF pathway recombination. This is DNA repair protein RecO from Cyanothece sp. (strain PCC 7425 / ATCC 29141).